A 330-amino-acid polypeptide reads, in one-letter code: D-cysteine desulfhydrase (330 aa).

Lysine 52 is modified (N6-(pyridoxal phosphate)lysine).

The protein belongs to the ACC deaminase/D-cysteine desulfhydrase family. In terms of assembly, homodimer. Pyridoxal 5'-phosphate is required as a cofactor.

The catalysed reaction is D-cysteine + H2O = hydrogen sulfide + pyruvate + NH4(+) + H(+). In terms of biological role, catalyzes the alpha,beta-elimination reaction of D-cysteine and of several D-cysteine derivatives. It could be a defense mechanism against D-cysteine. This Yersinia enterocolitica serotype O:8 / biotype 1B (strain NCTC 13174 / 8081) protein is D-cysteine desulfhydrase.